The chain runs to 164 residues: Dynein regulatory complex protein 8 (164 aa).

EF-hand domains are found at residues 16 to 51 and 94 to 129; these read ELHKKIKDAFEVFDHESNNTVDVREIGTIIRSLGCC and AAEDILLRAFEVLDPAKRGFLTKDELVKYMTEEGEP.

It belongs to the DRC8 family. Component of the nexin-dynein regulatory complex (N-DRC).

The protein localises to the cytoplasm. It localises to the cytoskeleton. The protein resides in the flagellum axoneme. Its function is as follows. Component of the nexin-dynein regulatory complex (N-DRC), a key regulator of ciliary/flagellar motility which maintains the alignment and integrity of the distal axoneme and regulates microtubule sliding in motile axonemes. This is Dynein regulatory complex protein 8 (Efcab2) from Mus musculus (Mouse).